We begin with the raw amino-acid sequence, 205 residues long: Probable ADP-ribosylation factor At2g15310 (205 aa).

Glycine 2 is lipidated: N-myristoyl glycine. Residues 24-31, 67-71, and 126-129 each bind GTP; these read GLDGSGKT, DIGGQ, and NKQD.

It belongs to the small GTPase superfamily. Arf family.

It localises to the golgi apparatus. In terms of biological role, GTP-binding protein involved in protein trafficking; may modulate vesicle budding and uncoating within the Golgi apparatus. This chain is Probable ADP-ribosylation factor At2g15310, found in Arabidopsis thaliana (Mouse-ear cress).